A 386-amino-acid chain; its full sequence is MLWFSLFILSIAIGGSFALLVAIARTPGLADLFPPKYFYHALVGHVDSALIVGLYAFLIFLWHRIFEKKENFASFLPALLGFFMIAGSSLFGLGQALWNNYVPTIIHPVFFGGVSLFFLGVFLNSLRFLPQAVKNFYIGDTLKSILSTTVINSFLMPLTYLIAYFNTPKGENVYEYFEALFWFGGHTHQFVNAGLLISLWLLLLRREVLNLWFLNLLLVVFPITYFFAQIFLNPLSSTGKSLTTWGYMVGIGIPTIVYGLITLVRAVKGLDFYRSILVLSVSLYLLGALMGYMIVGMDTRVPAHYHTVIASILVGVIALTFMYLQELGYMEKLGKFEKFIPFSTVLVCFFLSSDSSGRESLELQGKLRERITYKTQRFTYSWLSWD.

The next 11 helical transmembrane spans lie at 3–23 (WFSL…LVAI), 42–62 (LVGH…IFLW), 72–92 (FASF…SLFG), 102–122 (VPTI…LGVF), 145–165 (ILST…IAYF), 183–203 (FGGH…WLLL), 212–232 (WFLN…QIFL), 244–264 (TWGY…ITLV), 276–296 (ILVL…MIVG), 308–328 (VIAS…QELG), and 333–353 (LGKF…FLSS).

The protein to R.prowazekii RP382.

Its subcellular location is the cell membrane. This is an uncharacterized protein from Aquifex aeolicus (strain VF5).